Here is a 498-residue protein sequence, read N- to C-terminus: Angiopoietin-1 (498 aa).

Residues Met-1–Cys-19 form the signal peptide. N-linked (GlcNAc...) asparagine glycans are attached at residues Asn-92, Asn-122, Asn-154, Asn-243, and Asn-295. Residues Arg-158–Leu-254 adopt a coiled-coil conformation. The Fibrinogen C-terminal domain occupies Lys-277–Asp-497. Intrachain disulfides connect Cys-286–Cys-315 and Cys-439–Cys-452.

Homooligomer. Interacts with TEK/TIE2. Interacts with SVEP1/polydom. Interacts with THBD; this interaction significantly inhibits the generation of activated PC and TAFIa/CPB2 by the thrombin/thrombomodulin complex.

Its subcellular location is the secreted. In terms of biological role, binds and activates TIE2 receptor by inducing its tyrosine phosphorylation. Implicated in endothelial developmental processes later and distinct from that of VEGF. Appears to play a crucial role in mediating reciprocal interactions between the endothelium and surrounding matrix and mesenchyme. Mediates blood vessel maturation/stability. It may play an important role in the heart early development. In Sus scrofa (Pig), this protein is Angiopoietin-1 (ANGPT1).